We begin with the raw amino-acid sequence, 705 residues long: Solute carrier family 12 member 8 (705 aa).

11 helical membrane passes run 38–58 (FGTW…VVLF), 69–89 (GVLL…ITVL), 92–112 (IGVA…ISSV), 121–141 (VGLL…TGFA), 159–179 (ISVA…KWII), 181–201 (LQLL…VGSF), 232–252 (FFTV…GFNM), 268–288 (LAAV…LGAV), 306–326 (LVGF…CMGG), 368–388 (LVTM…VVTI), and 390–410 (FMLT…AHCG). A disordered region spans residues 472–512 (ESRQLGSREGNNPKNQKRKGKKGAKQTLQDSFLLDPGSPLS). The span at 486-495 (NQKRKGKKGA) shows a compositional bias: basic residues. Transmembrane regions (helical) follow at residues 587-607 (WVSL…QWLY) and 612-632 (MGVA…LYLG).

This sequence belongs to the SLC12A transporter family.

Its subcellular location is the membrane. Functionally, cation/chloride cotransporter that may play a role in the control of keratinocyte proliferation. The polypeptide is Solute carrier family 12 member 8 (Slc12a8) (Mus musculus (Mouse)).